The following is a 36-amino-acid chain: Glucagon-2 (36 aa).

The protein belongs to the glucagon family.

It is found in the secreted. Functionally, glucagon plays a key role in glucose metabolism and homeostasis. Regulates blood glucose by increasing gluconeogenesis and decreasing glycolysis. The chain is Glucagon-2 from Huso dauricus (Kaluga sturgeon).